A 347-amino-acid chain; its full sequence is Holliday junction branch migration complex subunit RuvB (347 aa).

The large ATPase domain (RuvB-L) stretch occupies residues 1–181 (MTRNSLLNPE…FGIPVRLQFY (181 aa)). Positions 20, 21, 62, 65, 66, 67, 171, 181, and 218 each coordinate ATP. Threonine 66 lines the Mg(2+) pocket. The tract at residues 182-252 (SIEELRQVIT…IADEALNRLE (71 aa)) is small ATPAse domain (RuvB-S). The head domain (RuvB-H) stretch occupies residues 255–347 (KLGLDLMDRR…SEIKNQPGLL (93 aa)). 3 residues coordinate DNA: arginine 291, arginine 310, and arginine 315.

This sequence belongs to the RuvB family. As to quaternary structure, homohexamer. Forms an RuvA(8)-RuvB(12)-Holliday junction (HJ) complex. HJ DNA is sandwiched between 2 RuvA tetramers; dsDNA enters through RuvA and exits via RuvB. An RuvB hexamer assembles on each DNA strand where it exits the tetramer. Each RuvB hexamer is contacted by two RuvA subunits (via domain III) on 2 adjacent RuvB subunits; this complex drives branch migration. In the full resolvosome a probable DNA-RuvA(4)-RuvB(12)-RuvC(2) complex forms which resolves the HJ.

Its subcellular location is the cytoplasm. The catalysed reaction is ATP + H2O = ADP + phosphate + H(+). Its function is as follows. The RuvA-RuvB-RuvC complex processes Holliday junction (HJ) DNA during genetic recombination and DNA repair, while the RuvA-RuvB complex plays an important role in the rescue of blocked DNA replication forks via replication fork reversal (RFR). RuvA specifically binds to HJ cruciform DNA, conferring on it an open structure. The RuvB hexamer acts as an ATP-dependent pump, pulling dsDNA into and through the RuvAB complex. RuvB forms 2 homohexamers on either side of HJ DNA bound by 1 or 2 RuvA tetramers; 4 subunits per hexamer contact DNA at a time. Coordinated motions by a converter formed by DNA-disengaged RuvB subunits stimulates ATP hydrolysis and nucleotide exchange. Immobilization of the converter enables RuvB to convert the ATP-contained energy into a lever motion, pulling 2 nucleotides of DNA out of the RuvA tetramer per ATP hydrolyzed, thus driving DNA branch migration. The RuvB motors rotate together with the DNA substrate, which together with the progressing nucleotide cycle form the mechanistic basis for DNA recombination by continuous HJ branch migration. Branch migration allows RuvC to scan DNA until it finds its consensus sequence, where it cleaves and resolves cruciform DNA. This chain is Holliday junction branch migration complex subunit RuvB, found in Zymomonas mobilis subsp. mobilis (strain ATCC 31821 / ZM4 / CP4).